A 464-amino-acid polypeptide reads, in one-letter code: GTPase Der (464 aa).

2 consecutive EngA-type G domains span residues 3 to 166 and 177 to 350; these read ALVA…PVLE and LQFA…QSAN. GTP contacts are provided by residues 9–16, 56–60, 118–121, 183–190, 230–234, and 295–298; these read GRPNVGKS, DTGGV, NKAE, DTAGI, and NKWD. In terms of domain architecture, KH-like spans 351–435; sequence SHLPTGELNR…PIALEFRTVK (85 aa).

Belongs to the TRAFAC class TrmE-Era-EngA-EngB-Septin-like GTPase superfamily. EngA (Der) GTPase family. As to quaternary structure, associates with the 50S ribosomal subunit.

In terms of biological role, GTPase that plays an essential role in the late steps of ribosome biogenesis. The polypeptide is GTPase Der (Nitrosococcus oceani (strain ATCC 19707 / BCRC 17464 / JCM 30415 / NCIMB 11848 / C-107)).